Reading from the N-terminus, the 116-residue chain is Holo-[acyl-carrier-protein] synthase (116 aa).

Residues Asp5 and Glu50 each coordinate Mg(2+).

Belongs to the P-Pant transferase superfamily. AcpS family. It depends on Mg(2+) as a cofactor.

Its subcellular location is the cytoplasm. The enzyme catalyses apo-[ACP] + CoA = holo-[ACP] + adenosine 3',5'-bisphosphate + H(+). Transfers the 4'-phosphopantetheine moiety from coenzyme A to a Ser of acyl-carrier-protein. The sequence is that of Holo-[acyl-carrier-protein] synthase from Campylobacter lari (strain RM2100 / D67 / ATCC BAA-1060).